We begin with the raw amino-acid sequence, 308 residues long: MPTATAAQPLRPFGTVLSAVVTPFTASGAVDLDAAAALAVHLVEHGHDGLVVSGTTGESPTTSDEEKDRLLRAVLDAVGDRVHVLAGVGTNDTAHTLELARAAEKAGAHGLLVVTPYYNKPPQAALAHHFTTVADGTGLPVMLYDIPGRSGVPIETETLVRVAEHERIVAVKDAKGDSWGTSWVLARTELAYYSGDDAVNLPLLAQGASGIVSVVSHVAGREYAAMVAAVDAGDLVTARAIHTRLLPAVRGIMTRTQGVVAVKAALELTGVLSGRAVRPPLLPATPEEVAALAADLALAGLAPAPLDA.

Threonine 56 provides a ligand contact to pyruvate. Tyrosine 144 functions as the Proton donor/acceptor in the catalytic mechanism. Catalysis depends on lysine 172, which acts as the Schiff-base intermediate with substrate. Position 212 (valine 212) interacts with pyruvate.

This sequence belongs to the DapA family. As to quaternary structure, homotetramer; dimer of dimers.

It localises to the cytoplasm. The catalysed reaction is L-aspartate 4-semialdehyde + pyruvate = (2S,4S)-4-hydroxy-2,3,4,5-tetrahydrodipicolinate + H2O + H(+). Its pathway is amino-acid biosynthesis; L-lysine biosynthesis via DAP pathway; (S)-tetrahydrodipicolinate from L-aspartate: step 3/4. Catalyzes the condensation of (S)-aspartate-beta-semialdehyde [(S)-ASA] and pyruvate to 4-hydroxy-tetrahydrodipicolinate (HTPA). The polypeptide is 4-hydroxy-tetrahydrodipicolinate synthase (Kineococcus radiotolerans (strain ATCC BAA-149 / DSM 14245 / SRS30216)).